The following is a 411-amino-acid chain: Anaerobic nitric oxide reductase flavorubredoxin homolog (411 aa).

Residues 30-210 (LRGSSYNSYL…PFSRLVTPKI (181 aa)) are zinc metallo-hydrolase. Fe cation-binding residues include His-79, Glu-81, Asp-83, His-147, Asp-166, His-227, Cys-360, Cys-363, Cys-393, and Cys-396. Residues 355-406 (GPRMQCSVCQWIYDPAKGEPMQDVAPGTPWSEVPDNFLCPECSLGKDVFDEL) enclose the Rubredoxin-like domain.

In the N-terminal section; belongs to the zinc metallo-hydrolase group 3 family. As to quaternary structure, homotetramer. The cofactor is Fe cation.

The protein resides in the cytoplasm. It participates in nitrogen metabolism; nitric oxide reduction. Anaerobic nitric oxide reductase; uses NADH to detoxify nitric oxide (NO), protecting several 4Fe-4S NO-sensitive enzymes. Has at least 2 reductase partners, only one of which (NorW, flavorubredoxin reductase) has been identified. NO probably binds to the di-iron center. Also able to function as an aerobic oxygen reductase. The chain is Anaerobic nitric oxide reductase flavorubredoxin homolog from Escherichia coli O157:H7.